We begin with the raw amino-acid sequence, 456 residues long: Cysteine--tRNA ligase (456 aa).

C29 serves as a coordination point for Zn(2+). Positions 31 to 41 match the 'HIGH' region motif; sequence VTVYDYCHVGH. The Zn(2+) site is built by C210, H235, and E239. The 'KMSKS' region signature appears at 267–271; it reads KMSKS. Residue K270 participates in ATP binding.

Belongs to the class-I aminoacyl-tRNA synthetase family. Monomer. Zn(2+) is required as a cofactor.

The protein resides in the cytoplasm. It carries out the reaction tRNA(Cys) + L-cysteine + ATP = L-cysteinyl-tRNA(Cys) + AMP + diphosphate. This Hydrogenovibrio crunogenus (strain DSM 25203 / XCL-2) (Thiomicrospira crunogena) protein is Cysteine--tRNA ligase.